Reading from the N-terminus, the 81-residue chain is ATP synthase subunit c (81 aa).

2 helical membrane passes run 6 to 26 (AAAS…GPGF) and 57 to 77 (LAFM…LLFA).

It belongs to the ATPase C chain family. As to quaternary structure, F-type ATPases have 2 components, F(1) - the catalytic core - and F(0) - the membrane proton channel. F(1) has five subunits: alpha(3), beta(3), gamma(1), delta(1), epsilon(1). F(0) has four main subunits: a(1), b(1), b'(1) and c(10-14). The alpha and beta chains form an alternating ring which encloses part of the gamma chain. F(1) is attached to F(0) by a central stalk formed by the gamma and epsilon chains, while a peripheral stalk is formed by the delta, b and b' chains.

It localises to the cellular thylakoid membrane. In terms of biological role, f(1)F(0) ATP synthase produces ATP from ADP in the presence of a proton or sodium gradient. F-type ATPases consist of two structural domains, F(1) containing the extramembraneous catalytic core and F(0) containing the membrane proton channel, linked together by a central stalk and a peripheral stalk. During catalysis, ATP synthesis in the catalytic domain of F(1) is coupled via a rotary mechanism of the central stalk subunits to proton translocation. Its function is as follows. Key component of the F(0) channel; it plays a direct role in translocation across the membrane. A homomeric c-ring of between 10-14 subunits forms the central stalk rotor element with the F(1) delta and epsilon subunits. The sequence is that of ATP synthase subunit c from Rippkaea orientalis (strain PCC 8801 / RF-1) (Cyanothece sp. (strain PCC 8801)).